The primary structure comprises 103 residues: Pyrimidine/purine nucleoside phosphorylase (103 aa).

This sequence belongs to the nucleoside phosphorylase PpnP family.

It catalyses the reaction a purine D-ribonucleoside + phosphate = a purine nucleobase + alpha-D-ribose 1-phosphate. The catalysed reaction is adenosine + phosphate = alpha-D-ribose 1-phosphate + adenine. The enzyme catalyses cytidine + phosphate = cytosine + alpha-D-ribose 1-phosphate. It carries out the reaction guanosine + phosphate = alpha-D-ribose 1-phosphate + guanine. It catalyses the reaction inosine + phosphate = alpha-D-ribose 1-phosphate + hypoxanthine. The catalysed reaction is thymidine + phosphate = 2-deoxy-alpha-D-ribose 1-phosphate + thymine. The enzyme catalyses uridine + phosphate = alpha-D-ribose 1-phosphate + uracil. It carries out the reaction xanthosine + phosphate = alpha-D-ribose 1-phosphate + xanthine. Catalyzes the phosphorolysis of diverse nucleosides, yielding D-ribose 1-phosphate and the respective free bases. Can use uridine, adenosine, guanosine, cytidine, thymidine, inosine and xanthosine as substrates. Also catalyzes the reverse reactions. The protein is Pyrimidine/purine nucleoside phosphorylase of Shewanella oneidensis (strain ATCC 700550 / JCM 31522 / CIP 106686 / LMG 19005 / NCIMB 14063 / MR-1).